The sequence spans 353 residues: ATP-dependent (S)-NAD(P)H-hydrate dehydratase (353 aa).

Residues 18 to 345 (MLARVRQMVP…DEVHTAFLNL (328 aa)) form the YjeF C-terminal domain. Positions 95-121 (RSSPPALSSSDSGSSPSRTKSAPDTDP) are disordered. A compositionally biased stretch (low complexity) spans 96-114 (SSPPALSSSDSGSSPSRTK). (6S)-NADPHX-binding positions include Gly-143 and 196 to 202 (NVVEFGR). ATP-binding positions include 241 to 245 (KGAKD) and 260 to 269 (GGLKRSGGQG). Asp-270 is a binding site for (6S)-NADPHX.

The protein belongs to the NnrD/CARKD family. Requires Mg(2+) as cofactor.

It is found in the cytoplasm. The catalysed reaction is (6S)-NADHX + ATP = ADP + phosphate + NADH + H(+). The enzyme catalyses (6S)-NADPHX + ATP = ADP + phosphate + NADPH + H(+). In terms of biological role, catalyzes the dehydration of the S-form of NAD(P)HX at the expense of ATP, which is converted to ADP. Together with NAD(P)HX epimerase, which catalyzes the epimerization of the S- and R-forms, the enzyme allows the repair of both epimers of NAD(P)HX, a damaged form of NAD(P)H that is a result of enzymatic or heat-dependent hydration. This Neurospora crassa (strain ATCC 24698 / 74-OR23-1A / CBS 708.71 / DSM 1257 / FGSC 987) protein is ATP-dependent (S)-NAD(P)H-hydrate dehydratase.